The primary structure comprises 320 residues: Cytochrome f (320 aa).

The N-terminal stretch at 1–35 is a signal peptide; it reads MQTRNTFSWIREEITRSISVSLMIYIITWASISSA. Heme contacts are provided by Tyr-36, Cys-56, Cys-59, and His-60. A helical transmembrane segment spans residues 286 to 306; that stretch reads VQGLLFFLGSVVLAQIFLVLK.

The protein belongs to the cytochrome f family. In terms of assembly, the 4 large subunits of the cytochrome b6-f complex are cytochrome b6, subunit IV (17 kDa polypeptide, petD), cytochrome f and the Rieske protein, while the 4 small subunits are PetG, PetL, PetM and PetN. The complex functions as a dimer. Requires heme as cofactor.

The protein resides in the plastid. Its subcellular location is the chloroplast thylakoid membrane. Functionally, component of the cytochrome b6-f complex, which mediates electron transfer between photosystem II (PSII) and photosystem I (PSI), cyclic electron flow around PSI, and state transitions. This is Cytochrome f from Barbarea verna (Land cress).